The chain runs to 226 residues: 2-C-methyl-D-erythritol 4-phosphate cytidylyltransferase (226 aa).

The protein belongs to the IspD/TarI cytidylyltransferase family. IspD subfamily.

It catalyses the reaction 2-C-methyl-D-erythritol 4-phosphate + CTP + H(+) = 4-CDP-2-C-methyl-D-erythritol + diphosphate. Its pathway is isoprenoid biosynthesis; isopentenyl diphosphate biosynthesis via DXP pathway; isopentenyl diphosphate from 1-deoxy-D-xylulose 5-phosphate: step 2/6. Catalyzes the formation of 4-diphosphocytidyl-2-C-methyl-D-erythritol from CTP and 2-C-methyl-D-erythritol 4-phosphate (MEP). The protein is 2-C-methyl-D-erythritol 4-phosphate cytidylyltransferase of Microcystis aeruginosa (strain NIES-843 / IAM M-2473).